The primary structure comprises 291 residues: Flap endonuclease (291 aa).

The tract at residues 82–116 (YKGNRDEKYAQRTEEEKALDEQFFEYLKDAFELCK) is helical arch. Residue K83 coordinates DNA. The Mg(2+) site is built by D130, D153, D155, and D201. The segment at 188–224 (DVEQFISLKAIMGDLGDNIRGVEGIGAKRGYNIIREF) is DNA-binding; H3TH. In terms of domain architecture, 5'-3' exonuclease spans 190 to 263 (EQFISLKAIM…FRNLILVDLP (74 aa)). K(+) is bound by residues V209 and I212.

It depends on Mg(2+) as a cofactor. K(+) serves as cofactor.

It carries out the reaction Exonucleolytic cleavage in the 5'- to 3'-direction to yield nucleoside 5'-phosphates.. With respect to regulation, inhibited by p-hydroxymercuribenzoate (PHMB). In terms of biological role, catalyzes both the 5'-exonucleolytic and structure-specific endonucleolytic hydrolysis of DNA branched nucleic acid molecules and probably plays a role in viral genome replication. Active on flap (branched duplex DNA containing a free single-stranded 5'-end), 5'overhangs and pseudo-Y structures. The substrates require a free, single-stranded 5' end, with endonucleolytic hydrolysis occurring at the junction of double- and single-stranded DNA. This function may be used for example to trim such branched molecules generated by Okazaki fragments synthesis during replication. This is Flap endonuclease (D15) from Escherichia phage T5 (Enterobacteria phage T5).